Consider the following 129-residue polypeptide: Large ribosomal subunit protein bL12 (129 aa).

The protein belongs to the bacterial ribosomal protein bL12 family. In terms of assembly, homodimer. Part of the ribosomal stalk of the 50S ribosomal subunit. Forms a multimeric L10(L12)X complex, where L10 forms an elongated spine to which 2 to 4 L12 dimers bind in a sequential fashion. Binds GTP-bound translation factors.

Functionally, forms part of the ribosomal stalk which helps the ribosome interact with GTP-bound translation factors. Is thus essential for accurate translation. The polypeptide is Large ribosomal subunit protein bL12 (Maridesulfovibrio salexigens (strain ATCC 14822 / DSM 2638 / NCIMB 8403 / VKM B-1763) (Desulfovibrio salexigens)).